We begin with the raw amino-acid sequence, 175 residues long: Replication restart protein PriC (175 aa).

The protein belongs to the PriC family. Monomer. Oligomerizes in the absence of DNA. Component of the replication restart primosome, which is composed of PriA, PriB, PriC, DnaB and DnaT; DnaG primase associates transiently with this complex. Interacts with the C-terminus of SSB; this interaction is required for DnaB loading onto substrate replication forks. Interacts with DnaB alone and in the DnaB-DnaC complex, probably 1:1 binding with DnaB.

In terms of biological role, involved in the restart of stalled replication forks, which reloads the replicative helicase (DnaB) on sites other than the origin of replication. Recognizes abandoned replication forks and remodels DNA single-stranded binding protein (SSB) on ssDNA to uncover a loading site for DnaB. There are several restart pathways, the PriA-PriC pathway is a minor restart pathway. Also part of the minor PriC-Rep pathway for restart of stalled replication forks, which has a different substrate specificity than PriA. priB and priC have redundant roles in the cell. Stimulates the 3'-5' helicase activity of Rep helicase in vitro. In vitro can load the DnaB replicative helicase from a DnaB-DnaC complex on an SSB-coated stalled replication fork with no leading- or lagging-strand (or with a gap between the leading strand and fork junction) in the absence of other primosome proteins (PriA, PriB or DnaT). Also part of the major restart pathway with PriA, PriB, DnaB, DnaT and DnaG primase. PriC may contribute to the stability of the preprimosome complex. Preferentially binds approximately 7-9 nucleotides of single-stranded (ss)DNA, also binds double-stranded (ds)DNA. PriB is probably more important in the cell than PriC. The polypeptide is Replication restart protein PriC (Escherichia coli (strain K12)).